The sequence spans 252 residues: MHNPQSRGHNLSQAMSDQTVTNPAAEAQEGEITPDTPDTVDKVENTPVENVENPAEATPGEEDQASEATSANAADLLEQIAALEAAKASLSQVVEERNSQYIRLAADFENFRKRTQREKEELELQIKCSVIADLLPVVDSFELARTHIQTETEAEEKIHRSYQGVYKQLVECLKRIGVSAMQAKGKPFDPNLHEAVLREATNEHPEGTVIEELKRGYMLGDRVLRHAMVKVAAPPEEGSASNTNPTNDVTDV.

Residues 1-22 (MHNPQSRGHNLSQAMSDQTVTN) are compositionally biased toward polar residues. A disordered region spans residues 1–70 (MHNPQSRGHN…EEDQASEATS (70 aa)).

The protein belongs to the GrpE family. Homodimer.

Its subcellular location is the cytoplasm. Its function is as follows. Participates actively in the response to hyperosmotic and heat shock by preventing the aggregation of stress-denatured proteins, in association with DnaK and GrpE. It is the nucleotide exchange factor for DnaK and may function as a thermosensor. Unfolded proteins bind initially to DnaJ; upon interaction with the DnaJ-bound protein, DnaK hydrolyzes its bound ATP, resulting in the formation of a stable complex. GrpE releases ADP from DnaK; ATP binding to DnaK triggers the release of the substrate protein, thus completing the reaction cycle. Several rounds of ATP-dependent interactions between DnaJ, DnaK and GrpE are required for fully efficient folding. In Thermosynechococcus vestitus (strain NIES-2133 / IAM M-273 / BP-1), this protein is Protein GrpE.